The sequence spans 160 residues: Transcription elongation factor GreA (160 aa).

Residues 2-30 (SEKTYPMTLAEKEQLEQELEELKLVRRPE) adopt a coiled-coil conformation.

It belongs to the GreA/GreB family.

In terms of biological role, necessary for efficient RNA polymerase transcription elongation past template-encoded arresting sites. The arresting sites in DNA have the property of trapping a certain fraction of elongating RNA polymerases that pass through, resulting in locked ternary complexes. Cleavage of the nascent transcript by cleavage factors such as GreA or GreB allows the resumption of elongation from the new 3'terminus. GreA releases sequences of 2 to 3 nucleotides. The polypeptide is Transcription elongation factor GreA (Streptococcus mutans serotype c (strain ATCC 700610 / UA159)).